Reading from the N-terminus, the 262-residue chain is Zinc finger protein 138 (262 aa).

The segment at 110 to 132 (FRCKECDKSLCMLSRLTQHKKIH) adopts a C2H2-type 1 zinc-finger fold. A C2H2-type 2; degenerate zinc finger spans residues 138–160 (YKCEECGKTFNWSTNLSKPKKIH). Residues 166-188 (YKCEVCGKAFHQSSILTKHKIIR) form a C2H2-type 3; degenerate zinc finger. The C2H2-type 4 zinc-finger motif lies at 194–216 (YKCAHCGKAFKQSSHLTRHKIIH). The C2H2-type 5; degenerate zinc-finger motif lies at 222–244 (YKCEQCGKVFKQSPTLTKHQIIY). The C2H2-type 6; degenerate zinc-finger motif lies at 250 to 262 (YKCEECGKAFNLS).

Belongs to the krueppel C2H2-type zinc-finger protein family.

Its subcellular location is the nucleus. Functionally, may be involved in transcriptional regulation as a repressor. This chain is Zinc finger protein 138 (ZNF138), found in Homo sapiens (Human).